A 583-amino-acid polypeptide reads, in one-letter code: Propane 2-monooxygenase operon transcriptional activator MimR (583 aa).

The Sigma-54 factor interaction domain maps to 320-513 (LAGRSSSFRR…LRHVLTETLR (194 aa)). ATP-binding positions include 348 to 355 (GEKGSGRT) and 395 to 404 (DADFAVIVAD).

Its function is as follows. Acts as a transcriptional activator of the mimABCD operon encoding the propane 2-monooxygenase complex. This is Propane 2-monooxygenase operon transcriptional activator MimR from Mycolicibacterium goodii (Mycobacterium goodii).